Here is a 435-residue protein sequence, read N- to C-terminus: Tol-Pal system protein TolB (435 aa).

The first 26 residues, 1 to 26 (MKTFSLLRILIVLVGMAGAFATPAMA), serve as a signal peptide directing secretion.

This sequence belongs to the TolB family. As to quaternary structure, the Tol-Pal system is composed of five core proteins: the inner membrane proteins TolA, TolQ and TolR, the periplasmic protein TolB and the outer membrane protein Pal. They form a network linking the inner and outer membranes and the peptidoglycan layer.

The protein resides in the periplasm. Its function is as follows. Part of the Tol-Pal system, which plays a role in outer membrane invagination during cell division and is important for maintaining outer membrane integrity. In Allorhizobium ampelinum (strain ATCC BAA-846 / DSM 112012 / S4) (Agrobacterium vitis (strain S4)), this protein is Tol-Pal system protein TolB.